The chain runs to 100 residues: Urease subunit gamma (100 aa).

This sequence belongs to the urease gamma subunit family. As to quaternary structure, heterotrimer of UreA (gamma), UreB (beta) and UreC (alpha) subunits. Three heterotrimers associate to form the active enzyme.

Its subcellular location is the cytoplasm. It carries out the reaction urea + 2 H2O + H(+) = hydrogencarbonate + 2 NH4(+). It participates in nitrogen metabolism; urea degradation; CO(2) and NH(3) from urea (urease route): step 1/1. This chain is Urease subunit gamma, found in Clostridium perfringens.